Reading from the N-terminus, the 145-residue chain is Nickel-responsive regulator (145 aa).

Ni(2+) is bound by residues His-77, His-88, His-90, and Cys-96.

The protein belongs to the transcriptional regulatory CopG/NikR family. Homotetramer. Ni(2+) is required as a cofactor.

In terms of biological role, transcriptional repressor of the nikABCDE operon. Is active in the presence of excessive concentrations of intracellular nickel. In Edwardsiella ictaluri (strain 93-146), this protein is Nickel-responsive regulator.